Consider the following 387-residue polypeptide: Peptostreptococcal albumin-binding protein (387 aa).

The first 26 residues, Met1 to Ala26, serve as a signal peptide directing secretion. A disordered region spans residues Leu122 to Arg155. The segment at Thr213–Ala265 is GA module. Residues Gly266 to Arg360 form a disordered region. The segment covering Asn270–Gln282 has biased composition (polar residues). Residues Gly298–Arg360 show a composition bias toward basic and acidic residues. An LPXTG sorting signal motif is present at residues Leu355–Gly359. At Ala358 the chain carries Pentaglycyl murein peptidoglycan amidated alanine. A propeptide spans Gly359–Lys387 (removed by sortase).

Its subcellular location is the secreted. The protein localises to the cell wall. In terms of biological role, binds serum albumin. This Finegoldia magna (Peptostreptococcus magnus) protein is Peptostreptococcal albumin-binding protein (pab).